Here is a 276-residue protein sequence, read N- to C-terminus: Neuroendocrine protein 7B2 (276 aa).

A disulfide bond links Cys-155 and Cys-168.

The protein belongs to the 7B2 family. In terms of assembly, interacts with amon/PC2 early in the secretory pathway. Dissociation occurs at later stages.

It is found in the secreted. In terms of biological role, acts as a molecular chaperone for neuroendocrine convertase amon/PC2, preventing its premature activation in the regulated secretory pathway. Binds to inactive amon in the endoplasmic reticulum and facilitates its transport from there to later compartments of the secretory pathway where it is proteolytically matured and activated. Also required for cleavage of amon. This chain is Neuroendocrine protein 7B2, found in Drosophila melanogaster (Fruit fly).